Here is a 316-residue protein sequence, read N- to C-terminus: BTB/POZ domain-containing adapter for CUL3-mediated RhoA degradation protein 2 (316 aa).

The BTB domain maps to 28-96; that stretch reads KYVQLNVGGS…LRDDTITLPQ (69 aa). Residues 268 to 279 show a composition bias toward polar residues; that stretch reads EATSRSRSQASP. A disordered region spans residues 268 to 288; sequence EATSRSRSQASPSEDEDTFEL. Ser278 carries the phosphoserine modification. Ser280 bears the Phosphoserine; by CK2 mark.

It belongs to the BACURD family. As to quaternary structure, component of the BCR(TNFAIP1) E3 ubiquitin ligase complex, at least composed of CUL3, TNFAIP1/BACURD2 and RBX1. Interacts with RHOA; with a preference for RhoA-GDP. Interacts with RHOB. Interacts with PCNA. Interacts with CSNK2B. Phosphorylation at Ser-280 by CK2 facilitates the nucleus localization and increases interaction with PCNA.

The protein localises to the cytoplasm. It is found in the nucleus. The protein resides in the endosome. It functions in the pathway protein modification; protein ubiquitination. Functionally, substrate-specific adapter of a BCR (BTB-CUL3-RBX1) E3 ubiquitin-protein ligase complex involved in regulation of cytoskeleton structure. The BCR(TNFAIP1) E3 ubiquitin ligase complex mediates the ubiquitination of RHOA, leading to its degradation by the proteasome, thereby regulating the actin cytoskeleton and cell migration. Its interaction with RHOB may regulate apoptosis. May enhance the PCNA-dependent DNA polymerase delta activity. The chain is BTB/POZ domain-containing adapter for CUL3-mediated RhoA degradation protein 2 (Tnfaip1) from Mus musculus (Mouse).